Reading from the N-terminus, the 242-residue chain is Segregation and condensation protein A (242 aa).

This sequence belongs to the ScpA family. Component of a cohesin-like complex composed of ScpA, ScpB and the Smc homodimer, in which ScpA and ScpB bind to the head domain of Smc. The presence of the three proteins is required for the association of the complex with DNA.

Its subcellular location is the cytoplasm. Functionally, participates in chromosomal partition during cell division. May act via the formation of a condensin-like complex containing Smc and ScpB that pull DNA away from mid-cell into both cell halves. The polypeptide is Segregation and condensation protein A (Streptococcus pneumoniae serotype 4 (strain ATCC BAA-334 / TIGR4)).